The sequence spans 132 residues: MANLISFHDVAKHKCKNDCWILIHGKVYDISTFMDEHPGGDNVLLAVTGKDASIDFEDVNHSKDAKELMKKYCIGDVDQSTVPVTQQYIPPWEKESTAAETTKEESGKKLLIYLIPLLILGVAFALRFYNNK.

The Cytochrome b5 heme-binding domain occupies 2-78 (ANLISFHDVA…MKKYCIGDVD (77 aa)). 2 residues coordinate heme: His37 and His61. The chain crosses the membrane as a helical span at residues 110-129 (LLIYLIPLLILGVAFALRFY).

It belongs to the cytochrome b5 family. Interacts with CER1, BI-1, FAH1 and FAH2.

The protein resides in the endoplasmic reticulum membrane. Membrane bound hemoprotein which function as an electron carrier for several membrane bound oxygenases, including fatty acid desaturases. The sequence is that of Cytochrome B5 isoform C from Arabidopsis thaliana (Mouse-ear cress).